The following is a 202-amino-acid chain: Segregation and condensation protein B (202 aa).

Belongs to the ScpB family. As to quaternary structure, homodimer. Homodimerization may be required to stabilize the binding of ScpA to the Smc head domains. Component of a cohesin-like complex composed of ScpA, ScpB and the Smc homodimer, in which ScpA and ScpB bind to the head domain of Smc. The presence of the three proteins is required for the association of the complex with DNA.

It localises to the cytoplasm. Functionally, participates in chromosomal partition during cell division. May act via the formation of a condensin-like complex containing Smc and ScpA that pull DNA away from mid-cell into both cell halves. The protein is Segregation and condensation protein B of Clostridium acetobutylicum (strain ATCC 824 / DSM 792 / JCM 1419 / IAM 19013 / LMG 5710 / NBRC 13948 / NRRL B-527 / VKM B-1787 / 2291 / W).